Consider the following 538-residue polypeptide: Atos homolog protein B (538 aa).

Composition is skewed to polar residues over residues 1–12 and 129–141; these read MRHVQAETSPSS and GGSS…SGAR. 3 disordered regions span residues 1–98, 129–185, and 201–303; these read MRHV…EPPT, GGSS…QLHT, and LVSG…PTDC. Residues 227–238 are compositionally biased toward pro residues; that stretch reads HTPPGPGPPGPC. S254 and S255 each carry phosphoserine. The required for macropage invasion stretch occupies residues 348-430; the sequence is LLGNFEESLL…VPKVGTIQVT (83 aa). Residues 436–444 form a transactivation domain 1 (TAD1) region; it reads QTVVKMFLV.

Belongs to the ATOS family.

It localises to the nucleus. Transcription regulator that may syncronize transcriptional and translational programs. The polypeptide is Atos homolog protein B (Bos taurus (Bovine)).